The following is a 251-amino-acid chain: Regulator of G-protein signaling 7-binding protein B (251 aa).

The interval 1–43 (MCSAPNGRKNRPRSAANIFQIGKSSVRDPERRESTESARRAQR) is disordered. A compositionally biased stretch (basic and acidic residues) spans 25 to 43 (SVRDPERRESTESARRAQR). S-palmitoyl cysteine attachment occurs at residues Cys246 and Cys247.

Belongs to the RGS7BP/RGS9BP family. In terms of processing, palmitoylated. Undergoes rapid palmitoylation turnover. Palmitoylation regulates the cell membrane and nuclear shuttling and the regulation of GPCR signaling. Upon depalmitoylation, it is targeted from the plasma membrane into the nucleus. GPCR signaling inhibits depalmitoylation and promotes localization to the plasma membrane.

Its subcellular location is the nucleus. The protein resides in the cytoplasm. The protein localises to the cell membrane. Its function is as follows. Regulator of G protein-coupled receptor (GPCR) signaling. Regulatory subunit of the R7-Gbeta5 complexes that acts by controlling the subcellular location of the R7-Gbeta5 complexes. When palmitoylated, it targets the R7-Gbeta5 complexes to the plasma membrane, leading to inhibit G protein alpha subunits. When it is unpalmitoylated, the R7-Gbeta5 complexes undergo a nuclear/cytoplasmic shuttling. The sequence is that of Regulator of G-protein signaling 7-binding protein B (rgs7bpb) from Danio rerio (Zebrafish).